The sequence spans 293 residues: 3-hydroxybutyryl-CoA dehydrogenase (293 aa).

The protein belongs to the 3-hydroxyacyl-CoA dehydrogenase family.

It catalyses the reaction (3S)-3-hydroxybutanoyl-CoA + NADP(+) = acetoacetyl-CoA + NADPH + H(+). Its pathway is lipid metabolism; butanoate metabolism. The chain is 3-hydroxybutyryl-CoA dehydrogenase (hbdA) from Bradyrhizobium diazoefficiens (strain JCM 10833 / BCRC 13528 / IAM 13628 / NBRC 14792 / USDA 110).